The primary structure comprises 244 residues: MSATERQLQYLRQLVDGARRIAVLTGAGMSTESGIPDFRSADGLWSRDMSLTDAVSVDYFRRDPAAFWRAFRDIFHIKLVGDYQPNDGHRFLAALEASGKEVTILTQNIDGLHGRAGSRRVLELHGTLLTASCPDCRSPHPLDYVQRHELPACRRCGAALKPDVVLYGEAVPLIDVAFQAALNAELLLVMGSSLEVSPVNLIPVEAARAGIPCALINYTPTRFDALFDLCIQAGIGDTCRQLRA.

Positions 1 to 244 constitute a Deacetylase sirtuin-type domain; sequence MSATERQLQY…IGDTCRQLRA (244 aa). NAD(+)-binding residues include alanine 27, threonine 31, phenylalanine 38, arginine 39, glutamine 107, isoleucine 109, aspartate 110, and histidine 125. Phenylalanine 38 provides a ligand contact to nicotinamide. Nicotinamide contacts are provided by isoleucine 109 and aspartate 110. The Proton acceptor role is filled by histidine 125. Residues cysteine 133, cysteine 136, cysteine 153, and cysteine 156 each coordinate Zn(2+). The NAD(+) site is built by serine 192, serine 193, asparagine 217, and isoleucine 235.

This sequence belongs to the sirtuin family. Class U subfamily. The cofactor is Zn(2+).

It localises to the cytoplasm. It catalyses the reaction N(6)-acetyl-L-lysyl-[protein] + NAD(+) + H2O = 2''-O-acetyl-ADP-D-ribose + nicotinamide + L-lysyl-[protein]. Its function is as follows. NAD-dependent protein deacetylase which modulates the activities of several enzymes which are inactive in their acetylated form. The chain is NAD-dependent protein deacetylase from Chromobacterium violaceum (strain ATCC 12472 / DSM 30191 / JCM 1249 / CCUG 213 / NBRC 12614 / NCIMB 9131 / NCTC 9757 / MK).